The chain runs to 880 residues: Probable potassium channel AKT5 (880 aa).

Residues 1 to 82 (MGIEKRKKMV…PFDPRYRAWD (82 aa)) lie on the Cytoplasmic side of the membrane. The chain crosses the membrane as a helical span at residues 83–103 (WFLVILVLYTAWASPFEFGFL). The Extracellular segment spans residues 104–111 (QTPRAPLS). Residues 112-132 (ILDNVVNGFFAVDIVLTFFVA) traverse the membrane as a helical segment. The Cytoplasmic portion of the chain corresponds to 133 to 153 (FLDKATYLLVDDPKRIAWRYT). Residues 154-174 (STWLIFDVVSTVPYELFGSLL) form a helical membrane-spanning segment. Residues 175 to 182 (HNTIQGYG) are Extracellular-facing. The chain crosses the membrane as a helical; Voltage-sensor span at residues 183–203 (IFSMLRLWRLHRVSKCFARLE). Residues 204–217 (KDRKYNYFWIRCTK) are Cytoplasmic-facing. The helical transmembrane segment at 218 to 238 (LLLVSLFVVHCGACFCYSIAA) threads the bilayer. The Extracellular segment spans residues 239 to 265 (HYPDPSMTFMALAEANWKQKSLLIRYV). The segment at residues 266 to 285 (TAMYWSITTFSTTGYGDIHG) is an intramembrane region (pore-forming). Residues 286–291 (NNAEER) are Extracellular-facing. Residues 292 to 312 (AFILFYMIFNLGLLAYIIGNM) traverse the membrane as a helical segment. The Cytoplasmic segment spans residues 313-880 (TNLVVHVTSR…GDFLLLLKVS (568 aa)). 396–517 (LFHGISNDLL…IMNNLLQHLK (122 aa)) provides a ligand contact to a nucleoside 3',5'-cyclic phosphate. 5 ANK repeats span residues 541 to 570 (DLPL…NPNE), 574 to 603 (NGRT…DPNI), 607 to 636 (EGSV…TLSF), 637 to 667 (DTVG…DISL), and 671 to 700 (NGTT…DMDK). The region spanning 809-880 (VGGVYPARVT…GDFLLLLKVS (72 aa)) is the KHA domain.

It belongs to the potassium channel family. Plant (TC 1.A.1.4) subfamily. In terms of assembly, the potassium channel is probably composed of a homo- or heterotetrameric complex of pore-forming subunits. In terms of tissue distribution, predominantly expressed in flowers.

The protein localises to the membrane. Its function is as follows. Probable potassium channel. May interact with the cytoskeleton or with regulatory proteins. This Arabidopsis thaliana (Mouse-ear cress) protein is Probable potassium channel AKT5 (AKT5).